Here is a 92-residue protein sequence, read N- to C-terminus: MGLKQVQLFVRGRVQGVFFRASTQREAKRLGLTGWVKNRSDGSVEVLAEGEEDELKELIAWANRGPSAARVERVDVRWRGFSGDFFDFRITD.

An Acylphosphatase-like domain is found at 5 to 92 (QVQLFVRGRV…GDFFDFRITD (88 aa)). Active-site residues include arginine 20 and asparagine 38.

It belongs to the acylphosphatase family.

It carries out the reaction an acyl phosphate + H2O = a carboxylate + phosphate + H(+). The polypeptide is Acylphosphatase (acyP) (Sorangium cellulosum (strain So ce56) (Polyangium cellulosum (strain So ce56))).